The following is a 144-amino-acid chain: Ferredoxin-thioredoxin reductase catalytic chain, chloroplastic (144 aa).

Residues 1–31 (MKALQASIAYSFPISSPAASPRRFSRVIRAQ) constitute a chloroplast transit peptide. C83 contributes to the [4Fe-4S] cluster binding site. Catalysis depends on C85, which acts as the Nucleophile. C85 and C115 form a disulfide bridge. The [4Fe-4S] cluster site is built by C102, C104, and C113.

It belongs to the ferredoxin thioredoxin reductase beta subunit family. Heterodimer of subunit A (variable subunit) and subunit B (catalytic subunit). Heterodimeric FTR forms a complex with ferredoxin and thioredoxin. [4Fe-4S] cluster is required as a cofactor.

It localises to the plastid. The protein resides in the chloroplast. The catalysed reaction is [thioredoxin]-disulfide + 2 reduced [2Fe-2S]-[ferredoxin] + 2 H(+) = [thioredoxin]-dithiol + 2 oxidized [2Fe-2S]-[ferredoxin]. In terms of biological role, catalytic subunit of the ferredoxin-thioredoxin reductase (FTR), which catalyzes the two-electron reduction of thioredoxins by the electrons provided by reduced ferredoxin. The chain is Ferredoxin-thioredoxin reductase catalytic chain, chloroplastic (FTRC) from Spinacia oleracea (Spinach).